A 271-amino-acid chain; its full sequence is L-aspartate dehydrogenase (271 aa).

Positions 124 and 192 each coordinate NAD(+). Residue His222 is part of the active site.

This sequence belongs to the L-aspartate dehydrogenase family.

It carries out the reaction L-aspartate + NADP(+) + H2O = oxaloacetate + NH4(+) + NADPH + H(+). The catalysed reaction is L-aspartate + NAD(+) + H2O = oxaloacetate + NH4(+) + NADH + H(+). It functions in the pathway cofactor biosynthesis; NAD(+) biosynthesis; iminoaspartate from L-aspartate (dehydrogenase route): step 1/1. In terms of biological role, specifically catalyzes the NAD or NADP-dependent dehydrogenation of L-aspartate to iminoaspartate. In Methanosarcina acetivorans (strain ATCC 35395 / DSM 2834 / JCM 12185 / C2A), this protein is L-aspartate dehydrogenase.